The primary structure comprises 137 residues: Small ribosomal subunit protein uS9c (137 aa).

Belongs to the universal ribosomal protein uS9 family.

Its subcellular location is the plastid. The protein localises to the chloroplast. This is Small ribosomal subunit protein uS9c (rps9) from Gracilaria tenuistipitata var. liui (Red alga).